The sequence spans 170 residues: MNLKEFVVDVKDFPKQGIVFKDITPLLNNKDAFKYTIDQMADFIKQLDVDVVVAPEARGFLLASAVAYAANKRFVLVRKPNKLPREVYDVEYSLEYGTNHQQIHVGDLKPNDKVVVIDDVLATGGTMQAIIDLVKLSKAEVIGMSFLIDLTFLHDVNLFDQYKVQKLIKY.

Belongs to the purine/pyrimidine phosphoribosyltransferase family. As to quaternary structure, homodimer.

It is found in the cytoplasm. It catalyses the reaction AMP + diphosphate = 5-phospho-alpha-D-ribose 1-diphosphate + adenine. The protein operates within purine metabolism; AMP biosynthesis via salvage pathway; AMP from adenine: step 1/1. Functionally, catalyzes a salvage reaction resulting in the formation of AMP, that is energically less costly than de novo synthesis. This chain is Adenine phosphoribosyltransferase, found in Mycoplasma mycoides subsp. mycoides SC (strain CCUG 32753 / NCTC 10114 / PG1).